A 496-amino-acid polypeptide reads, in one-letter code: Probable cytosol aminopeptidase (496 aa).

Lysine 258 and aspartate 263 together coordinate Mn(2+). The active site involves lysine 270. Mn(2+)-binding residues include aspartate 281, aspartate 340, and glutamate 342. Arginine 344 is an active-site residue.

Belongs to the peptidase M17 family. Mn(2+) is required as a cofactor.

It localises to the cytoplasm. The catalysed reaction is Release of an N-terminal amino acid, Xaa-|-Yaa-, in which Xaa is preferably Leu, but may be other amino acids including Pro although not Arg or Lys, and Yaa may be Pro. Amino acid amides and methyl esters are also readily hydrolyzed, but rates on arylamides are exceedingly low.. It catalyses the reaction Release of an N-terminal amino acid, preferentially leucine, but not glutamic or aspartic acids.. Its function is as follows. Presumably involved in the processing and regular turnover of intracellular proteins. Catalyzes the removal of unsubstituted N-terminal amino acids from various peptides. The polypeptide is Probable cytosol aminopeptidase (Helicobacter pylori (strain G27)).